A 37-amino-acid polypeptide reads, in one-letter code: Large ribosomal subunit protein bL36 (37 aa).

It belongs to the bacterial ribosomal protein bL36 family.

The protein is Large ribosomal subunit protein bL36 of Clostridioides difficile (strain 630) (Peptoclostridium difficile).